Here is a 125-residue protein sequence, read N- to C-terminus: MLLPILAICMGASVGALARWGLALWFGAGGFMPWGTLAANLVGGYLVGVAIASFHLLPDLDPAWRLALVTGFLGGLTTFSSFSAEVVTMLLEGRPGVALLTAAAHLGGSLFLTWLGIRSVQALAA.

A run of 4 helical transmembrane segments spans residues Ile-5–Trp-25, Leu-37–Leu-57, Gly-71–Leu-91, and Val-97–Ile-117. The Na(+) site is built by Gly-74 and Thr-77.

This sequence belongs to the fluoride channel Fluc/FEX (TC 1.A.43) family.

It localises to the cell inner membrane. It catalyses the reaction fluoride(in) = fluoride(out). With respect to regulation, na(+) is not transported, but it plays an essential structural role and its presence is essential for fluoride channel function. Its function is as follows. Fluoride-specific ion channel. Important for reducing fluoride concentration in the cell, thus reducing its toxicity. This is Fluoride-specific ion channel FluC from Variovorax paradoxus (strain S110).